Here is a 307-residue protein sequence, read N- to C-terminus: Epimerase family protein ML0860 (307 aa).

It belongs to the NAD(P)-dependent epimerase/dehydratase family. SDR39U1 subfamily.

The polypeptide is Epimerase family protein ML0860 (Mycobacterium leprae (strain TN)).